The primary structure comprises 210 residues: uncharacterized protein (210 aa).

2 disordered regions span residues 1–21 (MHRLFGRKPPTQPTASLTDAI) and 168–210 (EALQ…STAQ). The stretch at 21–175 (IDSLDKRSDS…ELEALQQESS (155 aa)) forms a coiled coil. Over residues 174 to 184 (SSWLGDQSTAE) the composition is skewed to polar residues.

This sequence belongs to the SNF7 family.

This is an uncharacterized protein from Schizosaccharomyces pombe (strain 972 / ATCC 24843) (Fission yeast).